The primary structure comprises 243 residues: Small ribosomal subunit protein mS23 (243 aa).

This sequence belongs to the mitochondrion-specific ribosomal protein mS23 family. In terms of assembly, component of the mitochondrial small ribosomal subunit.

It localises to the mitochondrion. The protein is Small ribosomal subunit protein mS23 (rsm25) of Emericella nidulans (strain FGSC A4 / ATCC 38163 / CBS 112.46 / NRRL 194 / M139) (Aspergillus nidulans).